The chain runs to 264 residues: Thiazole synthase (264 aa).

The active-site Schiff-base intermediate with DXP is the K106. Residues G167, 193–194 (AG), and 215–216 (NT) each bind 1-deoxy-D-xylulose 5-phosphate.

Belongs to the ThiG family. As to quaternary structure, homotetramer. Forms heterodimers with either ThiH or ThiS.

It is found in the cytoplasm. The catalysed reaction is [ThiS sulfur-carrier protein]-C-terminal-Gly-aminoethanethioate + 2-iminoacetate + 1-deoxy-D-xylulose 5-phosphate = [ThiS sulfur-carrier protein]-C-terminal Gly-Gly + 2-[(2R,5Z)-2-carboxy-4-methylthiazol-5(2H)-ylidene]ethyl phosphate + 2 H2O + H(+). It functions in the pathway cofactor biosynthesis; thiamine diphosphate biosynthesis. Catalyzes the rearrangement of 1-deoxy-D-xylulose 5-phosphate (DXP) to produce the thiazole phosphate moiety of thiamine. Sulfur is provided by the thiocarboxylate moiety of the carrier protein ThiS. In vitro, sulfur can be provided by H(2)S. The protein is Thiazole synthase of Xanthomonas campestris pv. campestris (strain 8004).